The chain runs to 146 residues: MHSSLETTAPATLERRESNLGDKLILKGLKFYGFHGAIAEERTLGQMFLVDIDAWVSLKKAGESDNLEDTISYVDIFSLAKEIVEGSPRNLLETVAELIASKTLEKFHQINAVRVKLSKPNVALIKSTIDYLGVDIFRQRNTSSKN.

Substrate contacts are provided by residues glutamate 41, tyrosine 73, and 92–93 (LE). Lysine 119 (proton donor/acceptor) is an active-site residue.

This sequence belongs to the DHNA family. Homooctamer. Forms a hollow cylinder assembled from two ring-shaped tetramers. As to expression, expressed in roots, leaves, stems and siliques.

It catalyses the reaction 7,8-dihydroneopterin = 6-hydroxymethyl-7,8-dihydropterin + glycolaldehyde. Its pathway is cofactor biosynthesis; tetrahydrofolate biosynthesis; 2-amino-4-hydroxy-6-hydroxymethyl-7,8-dihydropteridine diphosphate from 7,8-dihydroneopterin triphosphate: step 3/4. Catalyzes the conversion of 7,8-dihydroneopterin into 6-hydroxymethyl-7,8-dihydropterin, a biosynthetic precursor of the vitamin tetrahydrofolate. Can use L-threo-dihydroneopterin and D-erythro-dihydroneopterin as substrates for the formation of 6-hydroxymethyldihydropterin, but it can also catalyze the epimerization of carbon 2' of dihydroneopterin and dihydromonapterin. This Arabidopsis thaliana (Mouse-ear cress) protein is Dihydroneopterin aldolase 1.